Here is a 326-residue protein sequence, read N- to C-terminus: Malate dehydrogenase (326 aa).

12–18 (GAAGQIA) contributes to the NAD(+) binding site. Residues R93 and R99 each contribute to the substrate site. Residues N106, Q113, and 130-132 (VGN) each bind NAD(+). 2 residues coordinate substrate: N132 and R163. The Proton acceptor role is filled by H188.

It belongs to the LDH/MDH superfamily. MDH type 2 family.

The enzyme catalyses (S)-malate + NAD(+) = oxaloacetate + NADH + H(+). Catalyzes the reversible oxidation of malate to oxaloacetate. This is Malate dehydrogenase from Corynebacterium diphtheriae (strain ATCC 700971 / NCTC 13129 / Biotype gravis).